A 144-amino-acid polypeptide reads, in one-letter code: Large ribosomal subunit protein uL15 (144 aa).

Basic and acidic residues predominate over residues 1–13; the sequence is MKLNELKPAEGSR. The segment at 1–47 is disordered; the sequence is MKLNELKPAEGSRKVRNRVGRGDSSGNGKTAGRGQKGQKARSKTRLG. The segment covering 23–35 has biased composition (gly residues); it reads DSSGNGKTAGRGQ.

The protein belongs to the universal ribosomal protein uL15 family. In terms of assembly, part of the 50S ribosomal subunit.

In terms of biological role, binds to the 23S rRNA. This is Large ribosomal subunit protein uL15 from Levilactobacillus brevis (strain ATCC 367 / BCRC 12310 / CIP 105137 / JCM 1170 / LMG 11437 / NCIMB 947 / NCTC 947) (Lactobacillus brevis).